A 267-amino-acid chain; its full sequence is Putative F-box protein At5g38810 (267 aa).

Residues Arg4–Lys53 form the F-box domain.

The sequence is that of Putative F-box protein At5g38810 from Arabidopsis thaliana (Mouse-ear cress).